A 281-amino-acid chain; its full sequence is Hydroxyethylthiazole kinase (281 aa).

R124 and S169 together coordinate ATP.

It belongs to the Thz kinase family. The cofactor is Mg(2+).

It catalyses the reaction 5-(2-hydroxyethyl)-4-methylthiazole + ATP = 4-methyl-5-(2-phosphooxyethyl)-thiazole + ADP + H(+). It participates in cofactor biosynthesis; thiamine diphosphate biosynthesis; 4-methyl-5-(2-phosphoethyl)-thiazole from 5-(2-hydroxyethyl)-4-methylthiazole: step 1/1. In terms of biological role, catalyzes the phosphorylation of the hydroxyl group of 4-methyl-5-beta-hydroxyethylthiazole (THZ). The chain is Hydroxyethylthiazole kinase from Rhodococcus erythropolis (strain PR4 / NBRC 100887).